A 347-amino-acid polypeptide reads, in one-letter code: Homeobox protein knotted-1-like 9 (347 aa).

Residues 1–17 are compositionally biased toward low complexity; sequence MESFASLAGGGSSSTTA. 3 disordered regions span residues 1 to 36, 122 to 145, and 179 to 206; these read MESF…PPPL, QQLD…DVPD, and DSNC…DPSD. The span at 22-36 shows a compositional bias: pro residues; it reads LIPPENPDRISPPPL. The segment covering 188–203 has biased composition (acidic residues); it reads SEEEQDTSCPEAEEID. The ELK domain maps to 208–228; that stretch reads QLKHQLLMKYGGSLGDLRQAF. A DNA-binding region (homeobox; TALE-type) is located at residues 229-293; it reads SKRTKKGKLP…NQRKRHWKPT (65 aa).

This sequence belongs to the TALE/KNOX homeobox family.

The protein localises to the nucleus. This chain is Homeobox protein knotted-1-like 9, found in Oryza sativa subsp. japonica (Rice).